A 286-amino-acid polypeptide reads, in one-letter code: Bifunctional protein FolD (286 aa).

Residues 165-167 and serine 190 contribute to the NADP(+) site; that span reads GRS.

It belongs to the tetrahydrofolate dehydrogenase/cyclohydrolase family. Homodimer.

The enzyme catalyses (6R)-5,10-methylene-5,6,7,8-tetrahydrofolate + NADP(+) = (6R)-5,10-methenyltetrahydrofolate + NADPH. The catalysed reaction is (6R)-5,10-methenyltetrahydrofolate + H2O = (6R)-10-formyltetrahydrofolate + H(+). It participates in one-carbon metabolism; tetrahydrofolate interconversion. Its function is as follows. Catalyzes the oxidation of 5,10-methylenetetrahydrofolate to 5,10-methenyltetrahydrofolate and then the hydrolysis of 5,10-methenyltetrahydrofolate to 10-formyltetrahydrofolate. The polypeptide is Bifunctional protein FolD (Paraburkholderia xenovorans (strain LB400)).